A 515-amino-acid chain; its full sequence is Fatty acyl-CoA reductase 1 (515 aa).

Topologically, residues 1-465 are cytoplasmic; the sequence is MVSIPEYYEG…ARKHLNKLRN (465 aa). The segment at 451-507 is necessary and sufficient for PEX19-mediated localization into peroxisome membrane; that stretch reads SGLPAARKHLNKLRNIRYGFNTILVILIWRIFIARSQMARNIWYFVVSLCYKFLSYF. A helical membrane pass occupies residues 466-483; it reads IRYGFNTILVILIWRIFI. Topologically, residues 484-515 are peroxisomal; sequence ARSQMARNIWYFVVSLCYKFLSYFRASSTMRY.

This sequence belongs to the fatty acyl-CoA reductase family. Interacts with PEX19; PEX19 mediates the targeting of FAR1 to peroxisomes.

It is found in the peroxisome membrane. The enzyme catalyses a long-chain fatty acyl-CoA + 2 NADPH + 2 H(+) = a long-chain primary fatty alcohol + 2 NADP(+) + CoA. It carries out the reaction hexadecanoyl-CoA + 2 NADPH + 2 H(+) = hexadecan-1-ol + 2 NADP(+) + CoA. The catalysed reaction is octadecanoyl-CoA + 2 NADPH + 2 H(+) = octadecan-1-ol + 2 NADP(+) + CoA. It catalyses the reaction eicosanoyl-CoA + 2 NADPH + 2 H(+) = eicosan-1-ol + 2 NADP(+) + CoA. The enzyme catalyses (9Z)-octadecenoyl-CoA + 2 NADPH + 2 H(+) = (9Z)-octadecen-1-ol + 2 NADP(+) + CoA. It carries out the reaction (9Z,12Z)-octadecadienoyl-CoA + 2 NADPH + 2 H(+) = (9Z,12Z)-octadecadien-1-ol + 2 NADP(+) + CoA. The catalysed reaction is 16-methylheptadecanoyl-CoA + 2 NADPH + 2 H(+) = 16-methylheptadecan-1-ol + 2 NADP(+) + CoA. It catalyses the reaction 18-methylnonadecanoyl-CoA + 2 NADPH + 2 H(+) = 18-methylnonadecan-1-ol + 2 NADP(+) + CoA. Its function is as follows. Catalyzes the reduction of saturated and unsaturated C16 or C18 fatty acyl-CoA to fatty alcohols. It plays an essential role in the production of ether lipids/plasmalogens which synthesis requires fatty alcohols. In parallel, it is also required for wax monoesters production since fatty alcohols also constitute a substrate for their synthesis. The polypeptide is Fatty acyl-CoA reductase 1 (Homo sapiens (Human)).